The following is a 572-amino-acid chain: Putative carbohydrate transport ATP-binding protein MPN_258 (572 aa).

ABC transporter domains follow at residues 6 to 253 (FRME…MGKE) and 327 to 572 (RFIR…LIMQ). 40–47 (GENGAGKS) provides a ligand contact to ATP.

Belongs to the ABC transporter superfamily.

The protein resides in the cell membrane. In terms of biological role, part of the ABC transporter complex involved in carbohydrates import. Probably responsible for energy coupling to the transport system. The sequence is that of Putative carbohydrate transport ATP-binding protein MPN_258 from Mycoplasma pneumoniae (strain ATCC 29342 / M129 / Subtype 1) (Mycoplasmoides pneumoniae).